Consider the following 462-residue polypeptide: Kinetochore protein Nuf2-B (462 aa).

The stretch at 143 to 462 forms a coiled coil; that stretch reads SGYKSALENV…AELNRRLSRQ (320 aa). Residues 236 to 259 are disordered; that stretch reads EQERMKSQIVESPEQRKSKTERMK. Basic and acidic residues predominate over residues 248–259; sequence PEQRKSKTERMK.

This sequence belongs to the NUF2 family. As to quaternary structure, component of the NDC80 complex, which is composed of ndc80, cdca1, spbc24 and spbc25. The NDC80 complex interacts with mis12 and zwint.

Its subcellular location is the nucleus. It localises to the chromosome. It is found in the centromere. The protein localises to the kinetochore. Its function is as follows. Acts as a component of the essential kinetochore-associated NDC80 complex, which is required for chromosome segregation and spindle checkpoint activity. Required for kinetochore integrity and the organization of stable microtubule binding sites in the outer plate of the kinetochore. The NDC80 complex synergistically enhances the affinity of the SKA1 complex for microtubules and may allow the NDC80 complex to track depolymerizing microtubules. The sequence is that of Kinetochore protein Nuf2-B (nuf2-b) from Xenopus laevis (African clawed frog).